Here is a 99-residue protein sequence, read N- to C-terminus: Endothelin receptor type B (99 aa).

Over 1-8 (PFGAEMCK) the chain is Extracellular. An intrachain disulfide couples Cys7 to Cys88. A helical membrane pass occupies residues 9–30 (LVPFIQKASVGITVLSLCALSI). Over 31-51 (DRYRAVASWSRIKGIGIPKWT) the chain is Cytoplasmic. Residues 52–76 (AVEIVLIWVVSVVLAVPEAIGFDMI) traverse the membrane as a helical segment. The Extracellular portion of the chain corresponds to 77–99 (TMDYKGSYLRICLLHPVQKTAFM).

This sequence belongs to the G-protein coupled receptor 1 family. Endothelin receptor subfamily. EDNRB sub-subfamily.

It localises to the cell membrane. Non-specific receptor for endothelin 1, 2, and 3. Mediates its action by association with G proteins that activate a phosphatidylinositol-calcium second messenger system. This chain is Endothelin receptor type B (EDNRB), found in Macaca fascicularis (Crab-eating macaque).